A 188-amino-acid polypeptide reads, in one-letter code: Peptidyl-tRNA hydrolase (188 aa).

Tyrosine 14 contributes to the tRNA binding site. Histidine 19 acts as the Proton acceptor in catalysis. Positions 64, 66, and 112 each coordinate tRNA.

It belongs to the PTH family. In terms of assembly, monomer.

It localises to the cytoplasm. It carries out the reaction an N-acyl-L-alpha-aminoacyl-tRNA + H2O = an N-acyl-L-amino acid + a tRNA + H(+). Functionally, hydrolyzes ribosome-free peptidyl-tRNAs (with 1 or more amino acids incorporated), which drop off the ribosome during protein synthesis, or as a result of ribosome stalling. Catalyzes the release of premature peptidyl moieties from peptidyl-tRNA molecules trapped in stalled 50S ribosomal subunits, and thus maintains levels of free tRNAs and 50S ribosomes. This Clostridium tetani (strain Massachusetts / E88) protein is Peptidyl-tRNA hydrolase.